Consider the following 295-residue polypeptide: Perivine-Nbeta-methyltransferase (295 aa).

Positions 76–85 are SAM motif I; the sequence is ILDVGCGKGG. The short motif at 138 to 144 is the Vacuolar targeting signal element; it reads DGSFELI. An SAM motif II region spans residues 139 to 147; that stretch reads GSFELIFVI. The SAM motif III stretch occupies residues 166–175; that stretch reads VAAPGAQIVI.

This sequence belongs to the class I-like SAM-binding methyltransferase superfamily. gTMT family. As to quaternary structure, homodimer. Mainly expressed in young leaves, and, to a lower extent, in mature leaves, flowers, stems and roots (at protein level). Transcripts levels are highest in flowers, moderate in leaves and low in roots and stems.

It is found in the vacuole membrane. It carries out the reaction perivine + S-adenosyl-L-methionine = vobasine + S-adenosyl-L-homocysteine + 2 H(+). It functions in the pathway alkaloid biosynthesis; vindoline biosynthesis. Functionally, S-adenosyl-L-methionine-dependent N-methyltransferase involved in the biosynthesis of biologically active monoterpenoid indole alkaloids (MIAs) natural products including vindoline. Catalyzes the conversion of perivine to Nbeta-methylperivine (vobasine) by methylating its N4 nitrogen. Inactive with picrinine as substrate. The protein is Perivine-Nbeta-methyltransferase of Catharanthus roseus (Madagascar periwinkle).